Here is a 492-residue protein sequence, read N- to C-terminus: MNRIRIHVLPTNRGRITPVPRSQEPLSCSFTHRPCSQPRLEGQEFCIKHILEDKNAPFKQCSYISTKNGKRCPSAAPKPEKKDGVSFCAEHARRNALALHAQMKKTNPGPVGETLLCQLSSYAKTELGSQTPESSRSEASRILDEDSWSDGEQEPITVDQTWRGDPDSEADSIDRDQEDPLKHAGVYTAEEVALIMREKLIRLQSLDIDQVKRLQHLLKEKKRRYLHNRKVEHEALGSSLLTGPEGLLARERENLKRLKCLRRYRQRYGVKALLHRQLKERRMLATDGAAQQAHTTRSSQRCLAFVDDVRCSNQSLPMTRHCLTHICQDTNRVLFKCCQGSEEVPCNKPVPVSLSEDPCCPLHFQLPPQMYKPEQVLSVPDDLEAGPMDLYLSAAELQPTESLPLEFSDDLDVVGDSMQCPPSPLLFDPSLTLEDHPVKEIAEGPVDILGQMQMAGDGCRSQGPRNSEKAPAPLSQSGIATANGKPEPTSVS.

K78 participates in a covalent cross-link: Glycyl lysine isopeptide (Lys-Gly) (interchain with G-Cter in SUMO2). Residues 126–182 (ELGSQTPESSRSEASRILDEDSWSDGEQEPITVDQTWRGDPDSEADSIDRDQEDPLK) form a disordered region. T131 bears the Phosphothreonine mark. Residues 135–144 (SRSEASRILD) show a composition bias toward basic and acidic residues. Phosphoserine occurs at positions 147, 149, 168, and 172. The segment covering 162-182 (WRGDPDSEADSIDRDQEDPLK) has biased composition (basic and acidic residues). A required for interaction with other NSL complex members region spans residues 308-364 (DVRCSNQSLPMTRHCLTHICQDTNRVLFKCCQGSEEVPCNKPVPVSLSEDPCCPLHF). A disordered region spans residues 453–492 (QMAGDGCRSQGPRNSEKAPAPLSQSGIATANGKPEPTSVS).

In terms of assembly, component of the NSL complex at least composed of KAT8/MOF, KANSL1, KANSL2, KANSL3, MCRS1, PHF20, OGT1/OGT, WDR5 and HCFC1. Ubiquitously expressed.

The protein localises to the nucleus. It is found in the mitochondrion. In terms of biological role, non-catalytic component of the NSL histone acetyltransferase complex, a multiprotein complex that mediates histone H4 acetylation at 'Lys-5'- and 'Lys-8' (H4K5ac and H4K8ac) at transcription start sites and promotes transcription initiation. Required for NSL complex stability and for transcription of intraciliary transport genes in both ciliated and non-ciliated cells by regulating histone H4 acetylation at 'Lys-5'- and 'Lys-12' (H4K5ac and H4K12ac). This is necessary for cilium assembly in ciliated cells and for organization of the microtubule cytoskeleton in non-ciliated cells. Required within the NSL complex to maintain nuclear architecture stability by promoting KAT8-mediated acetylation of lamin LMNA. This Capra hircus (Goat) protein is KAT8 regulatory NSL complex subunit 2 (KANSL2).